The sequence spans 140 residues: Transmembrane protein 107 (140 aa).

Helical transmembrane passes span 7-27 (LVPS…TIFW) and 53-73 (LIIA…GFLS). The N-linked (GlcNAc...) asparagine glycan is linked to N79. 2 helical membrane passes run 84–104 (LLSV…LFEG) and 113–133 (IMSF…IAVF).

The protein resides in the membrane. In terms of biological role, may play a role in cilia formation and embryonic patterning. This Xenopus laevis (African clawed frog) protein is Transmembrane protein 107 (tmem107).